The sequence spans 251 residues: SPbeta prophage-derived putative antirepressor protein YoqD (251 aa).

The polypeptide is SPbeta prophage-derived putative antirepressor protein YoqD (yoqD) (Bacillus subtilis (strain 168)).